The primary structure comprises 455 residues: Alcohol acyl transferase 1 allele GSb (455 aa).

Residues His-164 and Asn-385 each act as proton acceptor in the active site.

Belongs to the plant acyltransferase family. Expressed at very low levels in the skin of ripe fruit.

In terms of biological role, involved in the biosynthesis of volatile esters which confer ripe apple fruit flavor. Alcohol acyl transferase that can use a wide range of alcohols as substrate to produce esters. In Malus domestica (Apple), this protein is Alcohol acyl transferase 1 allele GSb.